We begin with the raw amino-acid sequence, 599 residues long: Putative clathrin assembly protein At1g03050 (599 aa).

Residues 26–162 (GRSASLSELD…DFRMQARHGK (137 aa)) enclose the ENTH domain. Disordered regions lie at residues 332–382 (KQSK…PEEE) and 580–599 (QGHM…TPQY). 2 stretches are compositionally biased toward acidic residues: residues 341–359 (ADED…EQED) and 373–382 (EEDDVKPEEE). Residues 585–599 (LRQNQNQPYSYTPQY) are compositionally biased toward polar residues.

The protein localises to the membrane. The protein resides in the clathrin-coated pit. It localises to the golgi apparatus. It is found in the cytoplasmic vesicle. Its subcellular location is the clathrin-coated vesicle. The chain is Putative clathrin assembly protein At1g03050 from Arabidopsis thaliana (Mouse-ear cress).